A 497-amino-acid chain; its full sequence is Anthranilate synthase component 1 (497 aa).

Residues Ser49 and 271 to 273 each bind L-tryptophan; that span reads PYL. 312-313 provides a ligand contact to chorismate; that stretch reads GT. Residue Glu339 participates in Mg(2+) binding. Chorismate contacts are provided by residues Arg447, 461–463, and Gly463; that span reads GAG. Glu476 serves as a coordination point for Mg(2+).

Belongs to the anthranilate synthase component I family. Heterotetramer consisting of two non-identical subunits: a beta subunit (TrpG) and a large alpha subunit (TrpE). It depends on Mg(2+) as a cofactor.

The catalysed reaction is chorismate + L-glutamine = anthranilate + pyruvate + L-glutamate + H(+). Its pathway is amino-acid biosynthesis; L-tryptophan biosynthesis; L-tryptophan from chorismate: step 1/5. Feedback inhibited by tryptophan. Part of a heterotetrameric complex that catalyzes the two-step biosynthesis of anthranilate, an intermediate in the biosynthesis of L-tryptophan. In the first step, the glutamine-binding beta subunit (TrpG) of anthranilate synthase (AS) provides the glutamine amidotransferase activity which generates ammonia as a substrate that, along with chorismate, is used in the second step, catalyzed by the large alpha subunit of AS (TrpE) to produce anthranilate. In the absence of TrpG, TrpE can synthesize anthranilate directly from chorismate and high concentrations of ammonia. The protein is Anthranilate synthase component 1 (trpE) of Acinetobacter calcoaceticus.